A 267-amino-acid polypeptide reads, in one-letter code: tRNA pseudouridine synthase A (267 aa).

The active-site Nucleophile is aspartate 51. Position 109 (tyrosine 109) interacts with substrate.

Belongs to the tRNA pseudouridine synthase TruA family. In terms of assembly, homodimer.

It carries out the reaction uridine(38/39/40) in tRNA = pseudouridine(38/39/40) in tRNA. Its function is as follows. Formation of pseudouridine at positions 38, 39 and 40 in the anticodon stem and loop of transfer RNAs. The chain is tRNA pseudouridine synthase A from Staphylococcus aureus (strain USA300).